We begin with the raw amino-acid sequence, 709 residues long: MASWLKVAEDLLEVVDRRAKIVATELSDEQSSPQPSGSSSQEGQAKKGKLREKGPLKLATGDAGSRTAAQKERKSRQPPRERIKIEKIRPSPPVDSSSVDASASKPDVSSSDVKGLDDDGGAEKEEKVVVDRKNDIGAEVVDTEVEVQSTERSAEDAAIVVDGAADSGNSEGAAESSAPSVPDERCEPSISNQDAEIVSAVNLEEKDSAMEVIHEKNIKEVPDTQVSGKSQDSKREGLSDSPESTENQQEHKLDSGSVKDQDQLEEARGLLKNVVKTGQSKEARLARVCAGLSSRLQEYKSENAQLEELLVQEREKCSSYEAHMKQLQQELSMSRVEGSRAESNMVDALTAKNAEIESLVKSLDSWKKKAAASEEKLAALQEDMDGLKRNRELTETRVIQALREELATVERRAEEERIAHNATKMAAVEREVELEHRAVEASNALARIQRAADQSSSRAMELEHKVAVLEVECASLQQELQEMEARNRRAQKKPSEEANQVIQMQAWQEEVERARQSQREAETKISSLEAELQKMRVEMAGMKRDAEHYSRQEHVELEKRYRELTDLLYHKQTQLESMASEKAALEFQLEKSIKQFHEVQMEAERSRVARRSASAWEEDADIKALEPLPLHHRHMATANQQLQKAAKLLDSGAVRATRFLWRHPVARVSLLFYLVFVHLFLMYLMHRLQDFASREGPTAMGGLANSDLP.

The Cytoplasmic portion of the chain corresponds to 1 to 664 (MASWLKVAED…RATRFLWRHP (664 aa)). 3 disordered regions span residues 24-132 (TELS…VVDR), 144-195 (EVEV…NQDA), and 211-265 (EVIH…DQLE). A compositionally biased stretch (low complexity) spans 29 to 43 (EQSSPQPSGSSSQEG). A compositionally biased stretch (basic and acidic residues) spans 78-89 (PPRERIKIEKIR). The span at 94–113 (VDSSSVDASASKPDVSSSDV) shows a compositional bias: low complexity. The segment covering 114-132 (KGLDDDGGAEKEEKVVVDR) has biased composition (basic and acidic residues). Over residues 162–180 (DGAADSGNSEGAAESSAPS) the composition is skewed to low complexity. Basic and acidic residues-rich tracts occupy residues 211-222 (EVIHEKNIKEVP) and 248-265 (QQEHKLDSGSVKDQDQLE). Residues 287–592 (RVCAGLSSRL…AALEFQLEKS (306 aa)) adopt a coiled-coil conformation. A helical; Signal-anchor for type II membrane protein membrane pass occupies residues 665–684 (VARVSLLFYLVFVHLFLMYL). The Lumenal portion of the chain corresponds to 685–707 (MHRLQDFASREGPTAMGGLANSD).

Its subcellular location is the golgi apparatus membrane. May be involved in maintaining Golgi structure and in intra-Golgi transport. The sequence is that of Golgin-84 from Oryza sativa subsp. japonica (Rice).